The sequence spans 227 residues: UPF0758 protein SSA_1218 (227 aa).

Residues 104–226 enclose the MPN domain; that stretch reads QIMGSQKLAR…YYSYREETDM (123 aa). Zn(2+) is bound by residues histidine 175, histidine 177, and aspartate 188. The short motif at 175–188 is the JAMM motif element; sequence HNHPSGSVVPSRND.

It belongs to the UPF0758 family.

The chain is UPF0758 protein SSA_1218 from Streptococcus sanguinis (strain SK36).